The chain runs to 690 residues: ATP-dependent DNA helicase Hel308 (690 aa).

ATP contacts are provided by residues Gln-26 and 45–52 (IPTASGKT). Residues 32–188 (AGYLESEDNY…WLDARVVEHD (157 aa)) form the Helicase ATP-binding domain. Residues 133 to 136 (DEFH) carry the DEAH box motif. Residues 208–417 (EKNDVVLKVL…NRDALYRQII (210 aa)) form the Helicase C-terminal domain.

This sequence belongs to the helicase family. Hel308 subfamily. As to quaternary structure, monomer. Binds replication protein A (RPA), in presence and absence of DNA.

The catalysed reaction is Couples ATP hydrolysis with the unwinding of duplex DNA by translocating in the 3'-5' direction.. The enzyme catalyses ATP + H2O = ADP + phosphate + H(+). Functionally, DNA-dependent ATPase and 3'-5' DNA helicase that may be involved in repair of stalled replication forks. Helicase with 3'-to 5'- polarity; able to unwind over 100 bp of DNA at 50 degrees Celsius. Unwinds forked DNA, preferentially on lagging strand forks; has weaker activity on Holliday junctions. Displaces the invading strand in DNA D-loops. Unwinds short oligonucleotides from dsDNA with 3'- but not blunt ends or 5'-ssDNA tails in an ATP-dependent manner. ATPase activity is stimulated by ssDNA but not dsDNA, protein binds ssDNA, dsDNA with 5'- or 3'-overhangs but not blunt ended dsDNA and replication forks. Replication forks bind both this protein and RPA. RPA does not stimulate the helicase activity of this protein. This is ATP-dependent DNA helicase Hel308 from Methanothermobacter thermautotrophicus (strain ATCC 29096 / DSM 1053 / JCM 10044 / NBRC 100330 / Delta H) (Methanobacterium thermoautotrophicum).